Reading from the N-terminus, the 271-residue chain is Protein MGF 360-15R (271 aa).

Belongs to the asfivirus MGF 360 family.

Its function is as follows. Plays a role in virus cell tropism, and may be required for efficient virus replication in macrophages. This chain is Protein MGF 360-15R, found in African swine fever virus (isolate Tick/Malawi/Lil 20-1/1983) (ASFV).